A 122-amino-acid chain; its full sequence is MAGPAMLVAAALALCLLLASPGLAWYKPTAGQGYYSVGRAAGLLSGFHRSPYARRSEPRGGTRSLGGVGTFREMRPNLRSLAVCVEEVTPNLQSCEPLPDGRATFQCKADVFLSLSASDCRK.

An N-terminal signal peptide occupies residues M1–A24. W25 carries the post-translational modification 6'-bromotryptophan. The propeptide occupies S56–K122.

Belongs to the neuropeptide B/W family.

It localises to the secreted. Functionally, may be involved in the regulation of feeding, neuroendocrine system, memory, learning and in the afferent pain pathway. The chain is Neuropeptide B (NPB) from Bos taurus (Bovine).